The primary structure comprises 432 residues: Enolase (432 aa).

(2R)-2-phosphoglycerate is bound at residue glutamine 163. The active-site Proton donor is glutamate 205. 3 residues coordinate Mg(2+): aspartate 241, glutamate 289, and aspartate 316. Lysine 341, arginine 370, serine 371, and lysine 392 together coordinate (2R)-2-phosphoglycerate. The active-site Proton acceptor is lysine 341.

It belongs to the enolase family. Requires Mg(2+) as cofactor.

It localises to the cytoplasm. The protein localises to the secreted. Its subcellular location is the cell surface. It catalyses the reaction (2R)-2-phosphoglycerate = phosphoenolpyruvate + H2O. It functions in the pathway carbohydrate degradation; glycolysis; pyruvate from D-glyceraldehyde 3-phosphate: step 4/5. Functionally, catalyzes the reversible conversion of 2-phosphoglycerate (2-PG) into phosphoenolpyruvate (PEP). It is essential for the degradation of carbohydrates via glycolysis. This is Enolase from Treponema pallidum (strain Nichols).